We begin with the raw amino-acid sequence, 168 residues long: Cell division inhibitor SulA (168 aa).

Residues 1 to 20 (MSTQSVSSHNIESSSFSANQ) form a disordered region. Residues 105-111 (ALLTGNY) are ftsZ binding. The tract at residues 161–168 (KIHSTLYH) is lon protease binding.

The protein belongs to the SulA family. In terms of assembly, interacts with FtsZ. Is rapidly cleaved and degraded by the Lon protease once DNA damage is repaired.

In terms of biological role, component of the SOS system and an inhibitor of cell division. Accumulation of SulA causes rapid cessation of cell division and the appearance of long, non-septate filaments. In the presence of GTP, binds a polymerization-competent form of FtsZ in a 1:1 ratio, thus inhibiting FtsZ polymerization and therefore preventing it from participating in the assembly of the Z ring. This mechanism prevents the premature segregation of damaged DNA to daughter cells during cell division. The chain is Cell division inhibitor SulA from Pectobacterium atrosepticum (strain SCRI 1043 / ATCC BAA-672) (Erwinia carotovora subsp. atroseptica).